A 601-amino-acid chain; its full sequence is ATP-dependent lipid A-core flippase (601 aa).

4 helical membrane-spanning segments follow: residues 27–47 (IGLF…QPML), 83–103 (LLIV…NYFL), 174–194 (LLWM…LIAV), and 267–287 (PLLQ…VLYL). An ABC transmembrane type-1 domain is found at 31 to 322 (LISIVGFLIF…LSEVSSTIQK (292 aa)). The region spanning 354-590 (LEVRNLSFTY…NGYYSRLHAM (237 aa)) is the ABC transporter domain. 388-395 (GRSGSGKS) contributes to the ATP binding site.

Belongs to the ABC transporter superfamily. Lipid exporter (TC 3.A.1.106) family. As to quaternary structure, homodimer.

Its subcellular location is the cell inner membrane. The enzyme catalyses ATP + H2O + lipid A-core oligosaccharideSide 1 = ADP + phosphate + lipid A-core oligosaccharideSide 2.. Involved in lipopolysaccharide (LPS) biosynthesis. Translocates lipid A-core from the inner to the outer leaflet of the inner membrane. Transmembrane domains (TMD) form a pore in the inner membrane and the ATP-binding domain (NBD) is responsible for energy generation. This Pseudomonas fluorescens (strain ATCC BAA-477 / NRRL B-23932 / Pf-5) protein is ATP-dependent lipid A-core flippase.